Here is a 117-residue protein sequence, read N- to C-terminus: MTSELPPQIQNQIAQLQQVQQQVQALSMQKSQIEAMQKESKMALEELERLADDAVIYRSVGELVIKTTKEESVSKLKDREETLSLRLQSISRQEERLTARFKQLQEQIQQALGPRAQ.

Belongs to the prefoldin subunit beta family. In terms of assembly, heterohexamer of two alpha and four beta subunits.

The protein resides in the cytoplasm. Molecular chaperone capable of stabilizing a range of proteins. Seems to fulfill an ATP-independent, HSP70-like function in archaeal de novo protein folding. The sequence is that of Prefoldin subunit beta from Methanosarcina mazei (strain ATCC BAA-159 / DSM 3647 / Goe1 / Go1 / JCM 11833 / OCM 88) (Methanosarcina frisia).